A 449-amino-acid chain; its full sequence is Phosphoglucosamine mutase (449 aa).

S104 serves as the catalytic Phosphoserine intermediate. Mg(2+) is bound by residues S104, D243, D245, and D247. S104 carries the post-translational modification Phosphoserine.

This sequence belongs to the phosphohexose mutase family. It depends on Mg(2+) as a cofactor. In terms of processing, activated by phosphorylation.

The enzyme catalyses alpha-D-glucosamine 1-phosphate = D-glucosamine 6-phosphate. Functionally, catalyzes the conversion of glucosamine-6-phosphate to glucosamine-1-phosphate. The sequence is that of Phosphoglucosamine mutase from Xanthomonas axonopodis pv. citri (strain 306).